The following is a 181-amino-acid chain: ATP synthase subunit delta (181 aa).

The protein belongs to the ATPase delta chain family. As to quaternary structure, F-type ATPases have 2 components, F(1) - the catalytic core - and F(0) - the membrane proton channel. F(1) has five subunits: alpha(3), beta(3), gamma(1), delta(1), epsilon(1). F(0) has three main subunits: a(1), b(2) and c(10-14). The alpha and beta chains form an alternating ring which encloses part of the gamma chain. F(1) is attached to F(0) by a central stalk formed by the gamma and epsilon chains, while a peripheral stalk is formed by the delta and b chains.

It is found in the cell inner membrane. Functionally, f(1)F(0) ATP synthase produces ATP from ADP in the presence of a proton or sodium gradient. F-type ATPases consist of two structural domains, F(1) containing the extramembraneous catalytic core and F(0) containing the membrane proton channel, linked together by a central stalk and a peripheral stalk. During catalysis, ATP synthesis in the catalytic domain of F(1) is coupled via a rotary mechanism of the central stalk subunits to proton translocation. Its function is as follows. This protein is part of the stalk that links CF(0) to CF(1). It either transmits conformational changes from CF(0) to CF(1) or is implicated in proton conduction. In Blochmanniella pennsylvanica (strain BPEN), this protein is ATP synthase subunit delta.